Reading from the N-terminus, the 552-residue chain is CTP synthase (552 aa).

The interval 1-270 is amidoligase domain; the sequence is MTKYVFVTGG…DRIICDELKL (270 aa). Ser-13 contacts CTP. Ser-13 contacts UTP. ATP contacts are provided by residues 14–19 and Asp-71; that span reads SLGKGI. 2 residues coordinate Mg(2+): Asp-71 and Glu-144. Residues 151-153, 191-196, and Lys-227 each bind CTP; these read DIE and KTKPTQ. UTP-binding positions include 191–196 and Lys-227; that span reads KTKPTQ. The 253-residue stretch at 295 to 547 folds into the Glutamine amidotransferase type-1 domain; it reads TIGMVGKYVD…VEAALANKQA (253 aa). An L-glutamine-binding site is contributed by Gly-356. Cys-383 (nucleophile; for glutamine hydrolysis) is an active-site residue. Residues 384–387, Glu-407, and Arg-473 each bind L-glutamine; that span reads LGMQ. Residues His-520 and Glu-522 contribute to the active site.

It belongs to the CTP synthase family. As to quaternary structure, homotetramer.

It catalyses the reaction UTP + L-glutamine + ATP + H2O = CTP + L-glutamate + ADP + phosphate + 2 H(+). The catalysed reaction is L-glutamine + H2O = L-glutamate + NH4(+). The enzyme catalyses UTP + NH4(+) + ATP = CTP + ADP + phosphate + 2 H(+). The protein operates within pyrimidine metabolism; CTP biosynthesis via de novo pathway; CTP from UDP: step 2/2. Allosterically activated by GTP, when glutamine is the substrate; GTP has no effect on the reaction when ammonia is the substrate. The allosteric effector GTP functions by stabilizing the protein conformation that binds the tetrahedral intermediate(s) formed during glutamine hydrolysis. Inhibited by the product CTP, via allosteric rather than competitive inhibition. Its function is as follows. Catalyzes the ATP-dependent amination of UTP to CTP with either L-glutamine or ammonia as the source of nitrogen. Regulates intracellular CTP levels through interactions with the four ribonucleotide triphosphates. This Burkholderia vietnamiensis (strain G4 / LMG 22486) (Burkholderia cepacia (strain R1808)) protein is CTP synthase.